Consider the following 604-residue polypeptide: Elongation factor 4 (604 aa).

Positions Ser-7–Ser-189 constitute a tr-type G domain. GTP contacts are provided by residues Asp-19–Thr-24 and Asn-136–Asp-139.

This sequence belongs to the TRAFAC class translation factor GTPase superfamily. Classic translation factor GTPase family. LepA subfamily.

The protein localises to the cell inner membrane. It carries out the reaction GTP + H2O = GDP + phosphate + H(+). Functionally, required for accurate and efficient protein synthesis under certain stress conditions. May act as a fidelity factor of the translation reaction, by catalyzing a one-codon backward translocation of tRNAs on improperly translocated ribosomes. Back-translocation proceeds from a post-translocation (POST) complex to a pre-translocation (PRE) complex, thus giving elongation factor G a second chance to translocate the tRNAs correctly. Binds to ribosomes in a GTP-dependent manner. The sequence is that of Elongation factor 4 from Synechococcus elongatus (strain ATCC 33912 / PCC 7942 / FACHB-805) (Anacystis nidulans R2).